A 179-amino-acid polypeptide reads, in one-letter code: Viral interleukin-10 homolog (179 aa).

Positions 1–18 (MFRASLLCCLVLLAGVWA) are cleaved as a signal peptide. Cystine bridges form between C30-C127 and C80-C133. 2 N-linked (GlcNAc...) asparagine; by host glycosylation sites follow: N100 and N135.

It belongs to the IL-10 family.

The protein resides in the secreted. In terms of biological role, down-regulates the expression of the TAP1 gene (transporter associated with antigen processing), thereby affecting the transport of peptides into the endoplasmic reticulum and subsequent peptide loading by MHC class I molecules. In consequence, infected cells are masked for immune recognition by cytotoxic T-lymphocytes. In Equus caballus (Horse), this protein is Viral interleukin-10 homolog.